Consider the following 353-residue polypeptide: Serine proteinase inhibitor 1 (353 aa).

This sequence belongs to the serpin family. Poxviruses subfamily.

The protein localises to the host cytoplasm. Functionally, plays a role in mediating viral host range. May act to inhibit a caspase independent form of apoptosis to allow efficient virus replication in infected cells. The sequence is that of Serine proteinase inhibitor 1 (OPG208) from Vaccinia virus (strain Copenhagen) (VACV).